The sequence spans 224 residues: Mammalian ependymin-related protein 1 (224 aa).

Residues 1–37 form the signal peptide; that stretch reads MPARAPRRLVQGPRGTWLLGSLWVWVLCGLGMAGSLG. 3 disulfide bridges follow: C42-C172, C88-C222, and C113-C210. 2 N-linked (GlcNAc...) asparagine glycosylation sites follow: N130 and N182.

This sequence belongs to the ependymin family. Homodimer. Post-translationally, N-glycosylated; the glycan contains mannose-6-phosphate moieties. In terms of tissue distribution, detected in brain, small intestine and in soleus, extensor digitorum longus and white gastrocnemius (at protein level). Detected in brain and skeletal muscle, and at lower leavels in heart.

It localises to the lysosome lumen. The protein resides in the secreted. Functionally, binds anionic lipids and gangliosides at acidic pH. This Mus musculus (Mouse) protein is Mammalian ependymin-related protein 1 (Epdr1).